A 122-amino-acid polypeptide reads, in one-letter code: Double-headed protease inhibitor, submandibular gland (122 aa).

2 Kazal-like domains span residues 10 to 70 and 71 to 121; these read GGRK…NCDI and ECTQ…QCES. 6 disulfides stabilise this stretch: cysteine 16-cysteine 50, cysteine 28-cysteine 47, cysteine 36-cysteine 68, cysteine 72-cysteine 101, cysteine 79-cysteine 98, and cysteine 87-cysteine 119.

The protein localises to the secreted. This inhibitor is composed of two homologous actively inhibiting halves: one which inhibits trypsin, the other which inhibits elastase. The polypeptide is Double-headed protease inhibitor, submandibular gland (Meles meles (Eurasian badger)).